The primary structure comprises 334 residues: Meso-diaminopimelate D-dehydrogenase (334 aa).

Residues 16 to 19, 40 to 42, 75 to 78, 98 to 100, and 127 to 131 contribute to the NADP(+) site; these read YGNL, TRR, CSGS, GFD, and CGWDP. Residues aspartate 100, aspartate 130, tryptophan 154, 160-161, threonine 179, arginine 205, histidine 255, and asparagine 284 contribute to the substrate site; that span reads QG.

The protein belongs to the diaminopimelate dehydrogenase family. Homodimer.

The catalysed reaction is meso-2,6-diaminopimelate + NADP(+) + H2O = (S)-2-amino-6-oxoheptanedioate + NH4(+) + NADPH + H(+). The protein operates within amino-acid biosynthesis; L-lysine biosynthesis via DAP pathway; DL-2,6-diaminopimelate from (S)-tetrahydrodipicolinate: step 1/1. Functionally, catalyzes the reversible NADPH-dependent reductive amination of L-2-amino-6-oxopimelate, the acyclic form of L-tetrahydrodipicolinate, to generate the meso compound, D,L-2,6-diaminopimelate. Probably plays a role in lysine biosynthesis. Exhibits a high substrate specificity for meso-2,6-diaminopimelate (m-DAP), since the activity with L,L-2,6-diaminopimelate is less than 5% of the activity observed with m-DAP. Can use NAD(+) only very poorly since the activity observed in the presence of NAD(+) is about 0.3% of that with NADP(+). The protein is Meso-diaminopimelate D-dehydrogenase (ddh) of Acetivibrio thermocellus (strain ATCC 27405 / DSM 1237 / JCM 9322 / NBRC 103400 / NCIMB 10682 / NRRL B-4536 / VPI 7372) (Clostridium thermocellum).